The primary structure comprises 454 residues: uncharacterized protein (454 aa).

A disordered region spans residues 1-25 (MHGPTSKAISRNVRSVKRPRRAPRP). Positions 14-23 (RSVKRPRRAP) are enriched in basic residues.

The protein resides in the cytoplasm. It localises to the nucleus. This is an uncharacterized protein from Saccharomyces cerevisiae (strain ATCC 204508 / S288c) (Baker's yeast).